The primary structure comprises 327 residues: Deoxyribonuclease (327 aa).

Positions 1-24 (MSKKLRNFLVRIIVAAFASFAVMA) form a signal peptide, or 35. The disordered stretch occupies residues 299–327 (DSTTDEIENSVDDSEEIVYNDTTTEEEEN).

It catalyses the reaction Endonucleolytic cleavage to 5'-phosphodinucleotide and 5'-phosphooligonucleotide end-products.. In terms of biological role, may have a role in S.equisimilis virulence. In Streptococcus dysgalactiae subsp. equisimilis (Streptococcus equisimilis), this protein is Deoxyribonuclease (sdc).